Consider the following 151-residue polypeptide: Ocs element-binding factor 1 (151 aa).

The segment covering Met1–Asp17 has biased composition (polar residues). The disordered stretch occupies residues Met1 to Gln47. Positions Ala22–Arg39 are enriched in basic and acidic residues. The 64-residue stretch at Thr24–Leu87 folds into the bZIP domain. The tract at residues Arg26–Lys45 is basic motif. Residues Leu52–Leu59 form a leucine-zipper region.

It belongs to the bZIP family. As to expression, roots and shoots of young plants, and basal portion of leaves.

The protein localises to the nucleus. In terms of biological role, may contribute to developmentally specific patterns of gene expression. Binds specifically to ocs elements which are transcriptional enhancer found in the promoters of several plant genes. OCSBF-1 is able to bind to a site within each half of the ocs element as well as to animal AP-1 and CREB sites. This Zea mays (Maize) protein is Ocs element-binding factor 1 (OBF1).